A 103-amino-acid polypeptide reads, in one-letter code: uncharacterized protein (103 aa).

This is an uncharacterized protein from Pseudescherichia vulneris (Escherichia vulneris).